Consider the following 86-residue polypeptide: Protein Tat (86 aa).

The segment at 1–24 (MEPVDPRLEPWKHPGSQPKTACTN) is interaction with human CREBBP. Residues 1 to 48 (MEPVDPRLEPWKHPGSQPKTACTNCYCKKCCFHCQVCFITKALGISYG) are transactivation. Zn(2+)-binding residues include Cys22, Cys25, and Cys27. The tract at residues 22-37 (CTNCYCKKCCFHCQVC) is cysteine-rich. Lys28 carries the post-translational modification N6-acetyllysine; by host PCAF. Zn(2+) is bound by residues Cys30, His33, Cys34, and Cys37. Positions 38 to 48 (FITKALGISYG) are core. Residues 48–58 (GRKKRRQRRRP) are compositionally biased toward basic residues. Residues 48–86 (GRKKRRQRRRPPQGSQTHQVSLSKQPTSQSRGDPTGPKE) are disordered. The short motif at 49 to 57 (RKKRRQRRR) is the Nuclear localization signal, RNA-binding (TAR), and protein transduction element. The tract at residues 49–86 (RKKRRQRRRPPQGSQTHQVSLSKQPTSQSRGDPTGPKE) is interaction with the host capping enzyme RNGTT. Residues Lys50 and Lys51 each carry the N6-acetyllysine; by host EP300 and GCN5L2 modification. An asymmetric dimethylarginine; by host PRMT6 mark is found at Arg52 and Arg53. Positions 62–79 (SQTHQVSLSKQPTSQSRG) are enriched in polar residues. Lys71 participates in a covalent cross-link: Glycyl lysine isopeptide (Lys-Gly) (interchain with G-Cter in ubiquitin). The Cell attachment site motif lies at 78–80 (RGD).

This sequence belongs to the lentiviruses Tat family. Interacts with host CCNT1. Associates with the P-TEFb complex composed at least of Tat, P-TEFb (CDK9 and CCNT1), TAR RNA, RNA Pol II. Recruits the HATs CREBBP, TAF1/TFIID, EP300, PCAF and GCN5L2. Interacts with host KAT5/Tip60; this interaction targets the latter to degradation. Interacts with the host deacetylase SIRT1. Interacts with host capping enzyme RNGTT; this interaction stimulates RNGTT. Binds to host KDR, and to the host integrins ITGAV/ITGB3 and ITGA5/ITGB1. Interacts with host KPNB1/importin beta-1 without previous binding to KPNA1/importin alpha-1. Interacts with EIF2AK2. Interacts with host nucleosome assembly protein NAP1L1; this interaction may be required for the transport of Tat within the nucleus, since the two proteins interact at the nuclear rim. Interacts with host C1QBP/SF2P32; this interaction involves lysine-acetylated Tat. Interacts with the host chemokine receptors CCR2, CCR3 and CXCR4. Interacts with host DPP4/CD26; this interaction may trigger an anti-proliferative effect. Interacts with host LDLR. Interacts with the host extracellular matrix metalloproteinase MMP1. Interacts with host PRMT6; this interaction mediates Tat's methylation. Interacts with, and is ubiquitinated by MDM2/Hdm2. Interacts with host PSMC3 and HTATIP2. Interacts with STAB1; this interaction may overcome SATB1-mediated repression of IL2 and IL2RA (interleukin) in T cells by binding to the same domain than HDAC1. Interacts (when acetylated) with human CDK13, thereby increasing HIV-1 mRNA splicing and promoting the production of the doubly spliced HIV-1 protein Nef. Interacts with host TBP; this interaction modulates the activity of transcriptional pre-initiation complex. Interacts with host RELA. Interacts with host PLSCR1; this interaction negatively regulates Tat transactivation activity by altering its subcellular distribution. In terms of processing, asymmetrical arginine methylation by host PRMT6 seems to diminish the transactivation capacity of Tat and affects the interaction with host CCNT1. Post-translationally, acetylation by EP300, CREBBP, GCN5L2/GCN5 and PCAF regulates the transactivation activity of Tat. EP300-mediated acetylation of Lys-50 promotes dissociation of Tat from the TAR RNA through the competitive binding to PCAF's bromodomain. In addition, the non-acetylated Tat's N-terminus can also interact with PCAF. PCAF-mediated acetylation of Lys-28 enhances Tat's binding to CCNT1. Lys-50 is deacetylated by SIRT1. Polyubiquitination by host MDM2 does not target Tat to degradation, but activates its transactivation function and fosters interaction with CCNT1 and TAR RNA. In terms of processing, phosphorylated by EIF2AK2 on serine and threonine residues adjacent to the basic region important for TAR RNA binding and function. Phosphorylation of Tat by EIF2AK2 is dependent on the prior activation of EIF2AK2 by dsRNA.

The protein resides in the host nucleus. The protein localises to the host nucleolus. Its subcellular location is the host cytoplasm. It is found in the secreted. Transcriptional activator that increases RNA Pol II processivity, thereby increasing the level of full-length viral transcripts. Recognizes a hairpin structure at the 5'-LTR of the nascent viral mRNAs referred to as the transactivation responsive RNA element (TAR) and recruits the cyclin T1-CDK9 complex (P-TEFb complex) that will in turn hyperphosphorylate the RNA polymerase II to allow efficient elongation. The CDK9 component of P-TEFb and other Tat-activated kinases hyperphosphorylate the C-terminus of RNA Pol II that becomes stabilized and much more processive. Other factors such as HTATSF1/Tat-SF1, SUPT5H/SPT5, and HTATIP2 are also important for Tat's function. Besides its effect on RNA Pol II processivity, Tat induces chromatin remodeling of proviral genes by recruiting the histone acetyltransferases (HATs) CREBBP, EP300 and PCAF to the chromatin. This also contributes to the increase in proviral transcription rate, especially when the provirus integrates in transcriptionally silent region of the host genome. To ensure maximal activation of the LTR, Tat mediates nuclear translocation of NF-kappa-B by interacting with host RELA. Through its interaction with host TBP, Tat may also modulate transcription initiation. Tat can reactivate a latently infected cell by penetrating in it and transactivating its LTR promoter. In the cytoplasm, Tat is thought to act as a translational activator of HIV-1 mRNAs. In terms of biological role, extracellular circulating Tat can be endocytosed by surrounding uninfected cells via the binding to several surface receptors such as CD26, CXCR4, heparan sulfate proteoglycans (HSPG) or LDLR. Neurons are rarely infected, but they internalize Tat via their LDLR. Through its interaction with nuclear HATs, Tat is potentially able to control the acetylation-dependent cellular gene expression. Modulates the expression of many cellular genes involved in cell survival, proliferation or in coding for cytokines or cytokine receptors. Tat plays a role in T-cell and neurons apoptosis. Tat induced neurotoxicity and apoptosis probably contribute to neuroAIDS. Circulating Tat also acts as a chemokine-like and/or growth factor-like molecule that binds to specific receptors on the surface of the cells, affecting many cellular pathways. In the vascular system, Tat binds to ITGAV/ITGB3 and ITGA5/ITGB1 integrins dimers at the surface of endothelial cells and competes with bFGF for heparin-binding sites, leading to an excess of soluble bFGF. The protein is Protein Tat of Homo sapiens (Human).